The chain runs to 353 residues: UPF0283 membrane protein YcjF (353 aa).

A compositionally biased stretch (basic and acidic residues) spans 1 to 19; it reads MSEPLKPRIDFAEPLKEEP. The disordered stretch occupies residues 1-35; the sequence is MSEPLKPRIDFAEPLKEEPTSAFKAQQTFSEAESR. 3 consecutive transmembrane segments (helical) span residues 70 to 90, 100 to 120, and 213 to 233; these read MVMG…VQWT, VALG…GSVV, and ESTL…FIAW.

This sequence belongs to the UPF0283 family.

Its subcellular location is the cell inner membrane. In Salmonella paratyphi B (strain ATCC BAA-1250 / SPB7), this protein is UPF0283 membrane protein YcjF.